Here is a 2451-residue protein sequence, read N- to C-terminus: Reducing polyketide synthase 8 (2451 aa).

In terms of domain architecture, Ketosynthase family 3 (KS3) spans 12–434 (NEPIAIVGSS…GTNAHAILEA (423 aa)). Active-site for beta-ketoacyl synthase activity residues include C174, H313, and H354. The Malonyl-CoA:ACP transacylase (MAT) domain maps to 538–846 (VFTGQGAQWA…GPATETINNM (309 aa)). The tract at residues 940 to 1085 (HQLLGSASTF…GFLRIELGAP (146 aa)) is N-terminal hotdog fold. The PKS/mFAS DH domain occupies 940–1254 (HQLLGSASTF…LLNLPGSLRS (315 aa)). The Proton acceptor; for dehydratase activity role is filled by H974. A C-terminal hotdog fold region spans residues 1100–1254 (LIPLDVEELY…LLNLPGSLRS (155 aa)). D1160 serves as the catalytic Proton donor; for dehydratase activity. The tract at residues 1294–1590 (LVLFYCQKVL…QHFCSVMLSQ (297 aa)) is methyltransfrase (MT) domain. The region spanning 2088-2266 (TYLLLGLAGD…PGCVVHIGGV (179 aa)) is the Ketoreductase (KR) domain. Positions 2366–2451 (DACLDLLLGG…LAIWRKQVKA (86 aa)) constitute a Carrier domain. S2404 bears the O-(pantetheine 4'-phosphoryl)serine mark.

The cofactor is pantetheine 4'-phosphate.

It functions in the pathway secondary metabolite biosynthesis. Reducing polyketide synthase; part of the gene cluster that mediates the biosynthesis of fusamarins, isocoumarin derivatives that show moderate cytotoxicity with IC(50) values between 1 and 50 uM. The polyketide synthase FMN1 probably synthesizes two different polyketides, a tetra- and a pentaketide, containinga varying number of double bonds depending on the selective actions of the trans-enoyl reductase FMN2. Chain fusion will presumably be mediated by the KS domain before finally offloading is catalyzed by the alpha/beta hydrolase fold enzyme FMN3. This Fusarium mangiferae (Mango malformation disease fungus) protein is Reducing polyketide synthase 8.